The following is a 189-amino-acid chain: Elongation factor P (189 aa).

The protein belongs to the elongation factor P family.

Its subcellular location is the cytoplasm. It participates in protein biosynthesis; polypeptide chain elongation. In terms of biological role, involved in peptide bond synthesis. Stimulates efficient translation and peptide-bond synthesis on native or reconstituted 70S ribosomes in vitro. Probably functions indirectly by altering the affinity of the ribosome for aminoacyl-tRNA, thus increasing their reactivity as acceptors for peptidyl transferase. This Rhizobium etli (strain ATCC 51251 / DSM 11541 / JCM 21823 / NBRC 15573 / CFN 42) protein is Elongation factor P.